The primary structure comprises 392 residues: MKLELTPRQRKILWATVRRYIATAEPVGSKTLAQSYNLGVSTATIRNDLATLEQVGLLFQPHTSAGRIPSDFGYRVYVNDLLSSANMDGIPNDAPQPEPHPALQQLLDQLNRELGDDLDSFLQRVAQLLAHLSGCIALITPPQGPVVAVHHVQLLSVGPGRVMVLVVTDSYQTHSALVSPPDWPDDRREDLEDELQLLSNFLTLKLRGKTFAELQDLSWLKLDEEFRAYSHWLQQLLRSVVQRYLRPSLGQVFSAGMTELMRQPEFSQAQRMQAVAQLLEEGSEQLQGMIGLYSTPGCLFTSEAALSAPSAREKASSSTADQDPSHNVPVIIYIGSENPLESLHHCTVIASVYRRRSAPLGTVTLLGPTRMAYERSIAAVQTVASHLTRALA.

Belongs to the HrcA family.

Functionally, negative regulator of class I heat shock genes (grpE-dnaK-dnaJ and groELS operons). Prevents heat-shock induction of these operons. The chain is Heat-inducible transcription repressor HrcA from Synechococcus sp. (strain JA-3-3Ab) (Cyanobacteria bacterium Yellowstone A-Prime).